A 184-amino-acid polypeptide reads, in one-letter code: GTP-dependent dephospho-CoA kinase (184 aa).

GTP-binding residues include Asp33, Val34, Asp52, Lys54, and Glu103.

This sequence belongs to the GTP-dependent DPCK family.

It carries out the reaction 3'-dephospho-CoA + GTP = GDP + CoA + H(+). The protein operates within cofactor biosynthesis; coenzyme A biosynthesis. Catalyzes the GTP-dependent phosphorylation of the 3'-hydroxyl group of dephosphocoenzyme A to form coenzyme A (CoA). The chain is GTP-dependent dephospho-CoA kinase from Ignicoccus hospitalis (strain KIN4/I / DSM 18386 / JCM 14125).